The following is a 765-amino-acid chain: 5-methyltetrahydropteroyltriglutamate--homocysteine methyltransferase 1 (765 aa).

5-methyltetrahydropteroyltri-L-glutamate contacts are provided by lysine 18 and asparagine 116. 437-439 (IGS) is an L-homocysteine binding site. Residues 437-439 (IGS) and glutamate 490 each bind L-methionine. 5-methyltetrahydropteroyltri-L-glutamate-binding positions include 521–522 (RC) and tryptophan 567. Aspartate 605 serves as a coordination point for L-homocysteine. Aspartate 605 serves as a coordination point for L-methionine. Zn(2+) is bound by residues histidine 647, cysteine 649, histidine 658, aspartate 662, and glutamate 671. Histidine 701 (proton donor) is an active-site residue. Cysteine 733 contacts Zn(2+).

It belongs to the vitamin-B12 independent methionine synthase family. It depends on Zn(2+) as a cofactor. In terms of tissue distribution, expressed in leaves, stems, flowers, siliques and seeds.

The protein resides in the cytoplasm. Its subcellular location is the cytosol. It carries out the reaction 5-methyltetrahydropteroyltri-L-glutamate + L-homocysteine = tetrahydropteroyltri-L-glutamate + L-methionine. It functions in the pathway amino-acid biosynthesis; L-methionine biosynthesis via de novo pathway; L-methionine from L-homocysteine (MetE route): step 1/1. Its function is as follows. Catalyzes the transfer of a methyl group from 5-methyltetrahydrofolate to homocysteine resulting in methionine formation. The sequence is that of 5-methyltetrahydropteroyltriglutamate--homocysteine methyltransferase 1 (MS1) from Arabidopsis thaliana (Mouse-ear cress).